The following is a 338-amino-acid chain: MRVFYDKDCDLSIIQGKKVAIIGYGSQGHAHACNLKDSGVDVTVGLRSGSATVAKAEAHGLKVADVKTAVAAADVVMILTPDEFQGRLYKEEIEPNLKKGATLAFAHGFSIHYNQVVPRADLDVIMIAPKAPGHTVRSEFVKGGGIPDLIAIYQDASGNAKNVALSYACGVGGGRTGIIETTFKDETETDLFGEQAVLCGGCVELVKAGFETLVEAGYAPEMAYFECLHELKLIVDLMYEGGIANMNYSISNNAEYGEYVTGPEVINAESRAAMRNALKRIQDGEYAKMFITEGAANYPSMTAYRRNNAAHPIEQIGEKLRAMMPWIAANKIVDKSKN.

In terms of domain architecture, KARI N-terminal Rossmann spans 1 to 181 (MRVFYDKDCD…GGGRTGIIET (181 aa)). NADP(+)-binding positions include 24–27 (YGSQ), Arg-47, Ser-50, Thr-52, and 82–85 (DEFQ). His-107 is a catalytic residue. Position 133 (Gly-133) interacts with NADP(+). The 146-residue stretch at 182-327 (TFKDETETDL…EKLRAMMPWI (146 aa)) folds into the KARI C-terminal knotted domain. Residues Asp-190, Glu-194, Glu-226, and Glu-230 each coordinate Mg(2+). A substrate-binding site is contributed by Ser-251.

This sequence belongs to the ketol-acid reductoisomerase family. Mg(2+) is required as a cofactor.

The catalysed reaction is (2R)-2,3-dihydroxy-3-methylbutanoate + NADP(+) = (2S)-2-acetolactate + NADPH + H(+). It carries out the reaction (2R,3R)-2,3-dihydroxy-3-methylpentanoate + NADP(+) = (S)-2-ethyl-2-hydroxy-3-oxobutanoate + NADPH + H(+). It functions in the pathway amino-acid biosynthesis; L-isoleucine biosynthesis; L-isoleucine from 2-oxobutanoate: step 2/4. Its pathway is amino-acid biosynthesis; L-valine biosynthesis; L-valine from pyruvate: step 2/4. Involved in the biosynthesis of branched-chain amino acids (BCAA). Catalyzes an alkyl-migration followed by a ketol-acid reduction of (S)-2-acetolactate (S2AL) to yield (R)-2,3-dihydroxy-isovalerate. In the isomerase reaction, S2AL is rearranged via a Mg-dependent methyl migration to produce 3-hydroxy-3-methyl-2-ketobutyrate (HMKB). In the reductase reaction, this 2-ketoacid undergoes a metal-dependent reduction by NADPH to yield (R)-2,3-dihydroxy-isovalerate. This chain is Ketol-acid reductoisomerase (NADP(+)), found in Pseudomonas aeruginosa (strain LESB58).